A 180-amino-acid polypeptide reads, in one-letter code: Signal peptidase complex subunit 3 (180 aa).

At 1-12 (MHNLLSRANSLL) the chain is on the cytoplasmic side. The chain crosses the membrane as a helical; Signal-anchor for type II membrane protein span at residues 13–33 (AFTLWVMAAVTAACFLSTVFL). The Lumenal portion of the chain corresponds to 34–180 (DYTVSNHLEV…PTTYTTTRRS (147 aa)). N-linked (GlcNAc...) asparagine glycosylation occurs at Asn-141.

This sequence belongs to the SPCS3 family. In terms of assembly, component of the signal peptidase complex (SPC) composed of a catalytic subunit sec-11 and three accessory subunits spcs-1, spcs-2 and spcs-3. The complex induces a local thinning of the ER membrane which is used to measure the length of the signal peptide (SP) h-region of protein substrates. This ensures the selectivity of the complex towards h-regions shorter than 18-20 amino acids.

Its subcellular location is the endoplasmic reticulum membrane. In terms of biological role, essential component of the signal peptidase complex (SPC) which catalyzes the cleavage of N-terminal signal sequences from nascent proteins as they are translocated into the lumen of the endoplasmic reticulum. Essential for the SPC catalytic activity, possibly by stabilizing and positioning the active center of the complex close to the lumenal surface. In Caenorhabditis briggsae, this protein is Signal peptidase complex subunit 3.